Reading from the N-terminus, the 54-residue chain is Ovomucoid (54 aa).

The Kazal-like domain occupies 4–54; sequence VDCSDYPKPACLLEYMPLCGSDNKTYDNKCSFCNAVVDSNGTLSLSHFGKC. Cystine bridges form between Cys-6–Cys-36, Cys-14–Cys-33, and Cys-22–Cys-54. N-linked (GlcNAc...) asparagine glycosylation is present at Asn-43.

It is found in the secreted. This is Ovomucoid from Opisthocomus hoazin (Hoatzin).